The chain runs to 233 residues: Uracil-DNA glycosylase (233 aa).

Catalysis depends on aspartate 70, which acts as the Proton acceptor.

The protein belongs to the uracil-DNA glycosylase (UDG) superfamily. UNG family.

The protein localises to the cytoplasm. The enzyme catalyses Hydrolyzes single-stranded DNA or mismatched double-stranded DNA and polynucleotides, releasing free uracil.. In terms of biological role, excises uracil residues from the DNA which can arise as a result of misincorporation of dUMP residues by DNA polymerase or due to deamination of cytosine. The chain is Uracil-DNA glycosylase from Oleidesulfovibrio alaskensis (strain ATCC BAA-1058 / DSM 17464 / G20) (Desulfovibrio alaskensis).